Here is a 1072-residue protein sequence, read N- to C-terminus: Carbamoyl phosphate synthase large chain (1072 aa).

Residues 1 to 401 are carboxyphosphate synthetic domain; that stretch reads MPKYKDISKV…SLLKAVRSLE (401 aa). ATP contacts are provided by Arg-129, Arg-169, Gly-175, Gly-176, Lys-208, Leu-210, Glu-215, Gly-241, Val-242, His-243, Gln-284, and Glu-298. An ATP-grasp 1 domain is found at 133–327; that stretch reads KRKMQEIGEP…IAKIAAKIAI (195 aa). The Mg(2+) site is built by Gln-284, Glu-298, and Asn-300. Residues Gln-284, Glu-298, and Asn-300 each coordinate Mn(2+). Positions 402–544 are oligomerization domain; the sequence is IKAYGLRLDS…YIYSTYCEED (143 aa). A carbamoyl phosphate synthetic domain region spans residues 545–929; it reads EVETHDIPKV…ALYKALEGAG (385 aa). Residues 671-861 form the ATP-grasp 2 domain; the sequence is SKLLKELNIN…MVKLAVEVAL (191 aa). Residues Arg-707, Lys-746, Ile-748, Glu-752, Gly-777, Val-778, His-779, Ser-780, Gln-820, and Glu-832 each contribute to the ATP site. Mg(2+)-binding residues include Gln-820, Glu-832, and Asn-834. Mn(2+)-binding residues include Gln-820, Glu-832, and Asn-834. Positions 930–1072 constitute an MGS-like domain; the sequence is LKIPKKGKIL…QKDNVKNLVL (143 aa). Positions 930 to 1072 are allosteric domain; the sequence is LKIPKKGKIL…QKDNVKNLVL (143 aa).

This sequence belongs to the CarB family. As to quaternary structure, composed of two chains; the small (or glutamine) chain promotes the hydrolysis of glutamine to ammonia, which is used by the large (or ammonia) chain to synthesize carbamoyl phosphate. Tetramer of heterodimers (alpha,beta)4. The cofactor is Mg(2+). Mn(2+) serves as cofactor.

The enzyme catalyses hydrogencarbonate + L-glutamine + 2 ATP + H2O = carbamoyl phosphate + L-glutamate + 2 ADP + phosphate + 2 H(+). It carries out the reaction hydrogencarbonate + NH4(+) + 2 ATP = carbamoyl phosphate + 2 ADP + phosphate + 2 H(+). The protein operates within amino-acid biosynthesis; L-arginine biosynthesis; carbamoyl phosphate from bicarbonate: step 1/1. Its pathway is pyrimidine metabolism; UMP biosynthesis via de novo pathway; (S)-dihydroorotate from bicarbonate: step 1/3. In terms of biological role, large subunit of the glutamine-dependent carbamoyl phosphate synthetase (CPSase). CPSase catalyzes the formation of carbamoyl phosphate from the ammonia moiety of glutamine, carbonate, and phosphate donated by ATP, constituting the first step of 2 biosynthetic pathways, one leading to arginine and/or urea and the other to pyrimidine nucleotides. The large subunit (synthetase) binds the substrates ammonia (free or transferred from glutamine from the small subunit), hydrogencarbonate and ATP and carries out an ATP-coupled ligase reaction, activating hydrogencarbonate by forming carboxy phosphate which reacts with ammonia to form carbamoyl phosphate. The sequence is that of Carbamoyl phosphate synthase large chain from Caldanaerobacter subterraneus subsp. tengcongensis (strain DSM 15242 / JCM 11007 / NBRC 100824 / MB4) (Thermoanaerobacter tengcongensis).